Consider the following 120-residue polypeptide: Ragulator complex protein LAMTOR4 homolog (120 aa).

The disordered stretch occupies residues 93–120; sequence QNGVTTTTSSSSSNSVYNDASDSGAVLA. Low complexity predominate over residues 97–107; that stretch reads TTTTSSSSSNS.

It belongs to the LAMTOR4 family. Part of the Ragulator complex composed of Lamtor3, Lamtor2, CG14184, CG14812, and Lamtor4.

Its subcellular location is the lysosome. Its function is as follows. Regulator of the TOR pathway, a signaling cascade that promotes cell growth in response to growth factors, energy levels, and amino acids. As part of the Ragulator complex, may activate the TOR signaling cascade in response to amino acids. The chain is Ragulator complex protein LAMTOR4 homolog from Drosophila melanogaster (Fruit fly).